The following is a 344-amino-acid chain: Small neutral protease regulatory protein (344 aa).

Residues 1–60 enclose the HTH lysR-type domain; sequence MELEVRHLRALCAIADAGSLHRAARRLGVAQPTLSTQLTRIEQALGGPLFTRERTGCRPT. The H-T-H motif DNA-binding region spans 20-39; the sequence is LHRAARRLGVAQPTLSTQLT. The disordered stretch occupies residues 322 to 344; sequence SCGRAEGSRSRRPRDVAPPRPIG. Positions 327-338 are enriched in basic and acidic residues; sequence EGSRSRRPRDVA.

The protein belongs to the LysR transcriptional regulatory family.

In terms of biological role, transcriptional activator of the gene (snpA) for the small neutral protease. The protein is Small neutral protease regulatory protein (mprR) of Streptomyces lividans.